The chain runs to 87 residues: DNA-directed RNA polymerase subunit Rpo5 (87 aa).

The protein belongs to the archaeal Rpo5/eukaryotic RPB5 RNA polymerase subunit family. In terms of assembly, part of the RNA polymerase complex.

The protein resides in the cytoplasm. It catalyses the reaction RNA(n) + a ribonucleoside 5'-triphosphate = RNA(n+1) + diphosphate. DNA-dependent RNA polymerase (RNAP) catalyzes the transcription of DNA into RNA using the four ribonucleoside triphosphates as substrates. This is DNA-directed RNA polymerase subunit Rpo5 from Thermoplasma volcanium (strain ATCC 51530 / DSM 4299 / JCM 9571 / NBRC 15438 / GSS1).